The sequence spans 404 residues: Argininosuccinate synthase (404 aa).

ATP is bound by residues 10–18 (AYSGGVDTS) and Ala38. Tyr89 lines the L-citrulline pocket. Residue Gly119 coordinates ATP. Residues Thr121, Asn125, and Asp126 each contribute to the L-aspartate site. Asn125 contributes to the L-citrulline binding site. Positions 129, 177, 186, 262, and 274 each coordinate L-citrulline.

Belongs to the argininosuccinate synthase family. Type 1 subfamily. As to quaternary structure, homotetramer.

The protein resides in the cytoplasm. It catalyses the reaction L-citrulline + L-aspartate + ATP = 2-(N(omega)-L-arginino)succinate + AMP + diphosphate + H(+). Its pathway is amino-acid biosynthesis; L-arginine biosynthesis; L-arginine from L-ornithine and carbamoyl phosphate: step 2/3. In Prochlorococcus marinus (strain MIT 9312), this protein is Argininosuccinate synthase.